The following is a 469-amino-acid chain: Transcriptional coactivator YAP1 (469 aa).

The span at 1 to 21 (MEPAQQPPPQPAPQGPAPPSV) shows a compositional bias: pro residues. Residues 1–47 (MEPAQQPPPQPAPQGPAPPSVSPAGTPAAPPAPPAGHQVVHVRGDSE) form a disordered region. Phosphoserine is present on Ser-46. The residue at position 48 (Thr-48) is a Phosphothreonine. Residues 71 to 85 (MRLRKLPDSFFKPPE) are a coiled coil. Lys-75 bears the N6-lactoyllysine mark. The segment at 76–99 (LPDSFFKPPEPKSHSRQASTDAGT) is disordered. Ser-90 and Ser-94 each carry phosphoserine. A phosphothreonine mark is found at Thr-95 and Thr-104. Phosphoserine; by LATS1 and LATS2 is present on Ser-112. 2 positions are modified to phosphoserine: Ser-113 and Ser-116. Thr-136 bears the Phosphothreonine; by MAPK8 and MAPK9 mark. The residue at position 146 (Ser-146) is a Phosphoserine; by LATS1 and LATS2. 2 WW domains span residues 153 to 186 (VPLP…DPRK) and 212 to 245 (GPLP…DPRL). The segment at 258–290 (SAPVKQPPPLAPQSPQGGVLGGGSSNQQQQIQL) is disordered. Ser-271 and Ser-320 each carry phosphoserine. A transactivation domain region spans residues 273–469 (QGGVLGGGSS…LDKESFLTWL (197 aa)). The stretch at 280 to 325 (GSSNQQQQIQLQQLQMEKERLRLKQQELFRQELALRSQLPSLEQDG) forms a coiled coil. Ser-333 carries the post-translational modification Phosphoserine; by MAPK8 and MAPK9. Residues 345-357 (TNSSDPFLNSGTY) are compositionally biased toward polar residues. The tract at residues 345-405 (TNSSDPFLNS…SQSTLPSQQS (61 aa)) is disordered. Residues Ser-347, Ser-348, and Ser-354 each carry the phosphoserine modification. Ser-363 bears the Phosphoserine; by LATS1 and LATS2 mark. Over residues 365–375 (DSGLSMSSYSI) the composition is skewed to polar residues. 2 positions are modified to phosphoserine; by CK1: Ser-366 and Ser-369. Tyr-373 carries the phosphotyrosine; by ABL1 modification. Position 378 is a phosphothreonine; by MAPK8 and MAPK9 (Thr-378). Residues 393-405 (DTISQSTLPSQQS) show a composition bias toward polar residues.

The protein belongs to the YAP1 family. In terms of assembly, part of a complex when phosphorylated that contains DSG3, PKP1, YAP1 and YWHAG; the complex is required for localization of DSG3 and YAP1 to the cell membrane in keratinocytes. Binds to the SH3 domain of the YES kinase. Binds to WBP1 and WBP2. Binds, in vitro, through the WW1 domain, to neural isoforms of ENAH that contain the PPSY motif. The phosphorylated form interacts with YWHAB. Interacts (via WW domains) with LATS1 (via PPxY motif 2). Interacts with LATS2. Interacts (via WW domain 1) with ERBB4 (via PPxY motif 2). Interacts with TEAD1, TEAD2, TEAD3 and TEAD4. Interacts with TP73. Interacts with RUNX1. Interacts with HCK. Interacts (via WW domains) with PTPN14 (via PPxY motif 2); this interaction leads to the cytoplasmic sequestration of YAP1 and inhibits its transcriptional coactivator activity. Interacts (when phosphorylated at Ser-112) with SMAD2, SMAD3 and WWTR1. Interacts with PRRG2 (via cytoplasmic domain). Interacts (via WW domains) with PRRG4 (via cytoplasmic domain). Interacts (phosphorylated) with CLDN18; the interaction sequesters YAP1 away from the nucleus and thereby restricts transcription of YAP1 target genes. Interacts with SMAD1. Interacts with AMOT; the interaction facilitates translocation of YAP1 to the cytoplasm and tight junctions. Interacts with AMOTL2, the interaction is required for ubiquitination of AMOTL2 and localization of YAP1 to tight junctions. Post-translationally, phosphorylated by LATS1 and LATS2; leading to cytoplasmic translocation and inactivation. Phosphorylated by ABL1; leading to YAP1 stabilization, enhanced interaction with TP73 and recruitment onto proapoptotic genes; in response to DNA damage. Phosphorylation at Ser-366 and Ser-369 by CK1 is triggered by previous phosphorylation at Ser-363 by LATS proteins and leads to YAP1 ubiquitination by SCF(beta-TRCP) E3 ubiquitin ligase and subsequent degradation. Phosphorylated at Thr-104, Thr-136, Ser-333 and Thr-378 by MAPK8/JNK1 and MAPK9/JNK2, which is required for the regulation of apoptosis by YAP1. In terms of processing, lactylation by AARS1 promotes nuclear localization and stabilization of YAP1, leading to increased Hippo signaling pathway. Delactylated by SIRT1. Ubiquitinated by SCF(beta-TRCP) E3 ubiquitin ligase. In terms of tissue distribution, highly specific to cortical neurons.

The protein localises to the cytoplasm. The protein resides in the nucleus. It localises to the cell junction. It is found in the tight junction. Its subcellular location is the cell membrane. Its function is as follows. Transcriptional regulator with dual roles as a coactivator and corepressor. Critical downstream regulatory target in the Hippo signaling pathway, crucial for organ size control and tumor suppression by restricting proliferation and promoting apoptosis. The Hippo signaling pathway core involves a kinase cascade featuring STK3/MST2 and STK4/MST1, along with its regulatory partner SAV1, which phosphorylates and activates LATS1/2 in complex with their regulatory protein, MOB1. This activation leads to the phosphorylation and inactivation of the YAP1 oncoprotein and WWTR1/TAZ. Phosphorylation of YAP1 by LATS1/2 prevents its nuclear translocation, thereby regulating the expression of its target genes. The transcriptional regulation of gene expression requires TEAD transcription factors and modulates cell growth, anchorage-independent growth, and induction of epithelial-mesenchymal transition (EMT). Plays a key role in tissue tension and 3D tissue shape by regulating the cortical actomyosin network, acting via ARHGAP18, a Rho GTPase activating protein that suppresses F-actin polymerization. It also suppresses ciliogenesis by acting as a transcriptional corepressor of TEAD4 target genes AURKA and PLK1. In conjunction with WWTR1, regulates TGFB1-dependent SMAD2 and SMAD3 nuclear accumulation. Synergizes with WBP2 to enhance PGR activity. Functionally, attenuates p73-mediated cell death signaling in transcriptional repression-induced atypical death (TRIAD) of neurons. The polypeptide is Transcriptional coactivator YAP1 (Yap1) (Rattus norvegicus (Rat)).